The chain runs to 304 residues: Putative S-adenosyl-L-methionine-dependent methyltransferase MMAR_1057 (304 aa).

S-adenosyl-L-methionine-binding positions include Asp130 and 159 to 160; that span reads DL.

The protein belongs to the UPF0677 family.

Its function is as follows. Exhibits S-adenosyl-L-methionine-dependent methyltransferase activity. The polypeptide is Putative S-adenosyl-L-methionine-dependent methyltransferase MMAR_1057 (Mycobacterium marinum (strain ATCC BAA-535 / M)).